The sequence spans 60 residues: MAKKLEITLTRSVIGRPQDQRATVEALGLKKLNSTVVKEETPAILGMINKVSHLLTVKEA.

It belongs to the universal ribosomal protein uL30 family. Part of the 50S ribosomal subunit.

This Bacillus cereus (strain G9842) protein is Large ribosomal subunit protein uL30.